Consider the following 487-residue polypeptide: UDP-N-acetylmuramoyl-L-alanyl-D-glutamate--2,6-diaminopimelate ligase (487 aa).

2 residues coordinate UDP-N-acetyl-alpha-D-muramoyl-L-alanyl-D-glutamate: Leu23 and Ser25. 108–114 serves as a coordination point for ATP; it reads GTNGKTS. Residues 150 to 151, Ser177, Gln183, and Arg185 each bind UDP-N-acetyl-alpha-D-muramoyl-L-alanyl-D-glutamate; that span reads TT. Position 217 is an N6-carboxylysine (Lys217). Meso-2,6-diaminopimelate contacts are provided by residues Arg378, 402 to 405, Gly453, and Glu457; that span reads DNPR. Positions 402–405 match the Meso-diaminopimelate recognition motif motif; that stretch reads DNPR.

Belongs to the MurCDEF family. MurE subfamily. Requires Mg(2+) as cofactor. Carboxylation is probably crucial for Mg(2+) binding and, consequently, for the gamma-phosphate positioning of ATP.

Its subcellular location is the cytoplasm. The enzyme catalyses UDP-N-acetyl-alpha-D-muramoyl-L-alanyl-D-glutamate + meso-2,6-diaminopimelate + ATP = UDP-N-acetyl-alpha-D-muramoyl-L-alanyl-gamma-D-glutamyl-meso-2,6-diaminopimelate + ADP + phosphate + H(+). It participates in cell wall biogenesis; peptidoglycan biosynthesis. Catalyzes the addition of meso-diaminopimelic acid to the nucleotide precursor UDP-N-acetylmuramoyl-L-alanyl-D-glutamate (UMAG) in the biosynthesis of bacterial cell-wall peptidoglycan. This is UDP-N-acetylmuramoyl-L-alanyl-D-glutamate--2,6-diaminopimelate ligase from Pseudomonas syringae pv. tomato (strain ATCC BAA-871 / DC3000).